We begin with the raw amino-acid sequence, 343 residues long: Protein RecA (343 aa).

68-75 contributes to the ATP binding site; that stretch reads GPESSGKT.

It belongs to the RecA family.

The protein resides in the cytoplasm. Can catalyze the hydrolysis of ATP in the presence of single-stranded DNA, the ATP-dependent uptake of single-stranded DNA by duplex DNA, and the ATP-dependent hybridization of homologous single-stranded DNAs. It interacts with LexA causing its activation and leading to its autocatalytic cleavage. This is Protein RecA from Syntrophobacter fumaroxidans (strain DSM 10017 / MPOB).